Reading from the N-terminus, the 1108-residue chain is Retinal guanylyl cyclase 1 (1108 aa).

Residues 1–54 (MSAWLLPAGGLPGAGFCVPARQSPSSFSRVLRWPRPGLPGLLLLLLLPSPSALS) form the signal peptide. The Extracellular segment spans residues 55 to 465 (AVFKVGVLGP…PDVICNGGVE (411 aa)). Cysteines 108 and 136 form a disulfide. N-linked (GlcNAc...) asparagine glycosylation occurs at Asn300. Residues 466–490 (PGLVFVGFLLVIGMGLTGAFLAHYL) form a helical membrane-spanning segment. The Protein kinase domain maps to 491–811 (RHRLLHMQMA…DLTFDLFKSI (321 aa)). At 491-1108 (RHRLLHMQMA…KARPGQFTGK (618 aa)) the chain is on the cytoplasmic side. The 131-residue stretch at 883-1013 (TLYFSDIVGF…DTVNTASRME (131 aa)) folds into the Guanylate cyclase domain. Positions 1069–1108 (IPKPPDLQPGASNHGISLQEIPPERRKKLEKARPGQFTGK) are disordered.

The protein belongs to the adenylyl cyclase class-4/guanylyl cyclase family. In terms of assembly, homodimer; requires homodimerization for guanylyl cyclase activity. Interacts (via C-terminus) with RD3 (via C-terminus); promotes the exit of GUCY2E from the endoplasmic reticulum and its trafficking to the photoreceptor outer segments. Interaction with RD3 negatively regulates GUCY2E guanylate cyclase activity. Post-translationally, there are 9 conserved cysteine residues in sensory guanylate cyclases, 6 in the extracellular domain, which may be involved in intra- or interchain disulfide bonds.

The protein resides in the photoreceptor outer segment membrane. It localises to the endoplasmic reticulum membrane. The catalysed reaction is GTP = 3',5'-cyclic GMP + diphosphate. With respect to regulation, activated by GUCA1A when free calcium ions concentration is low, and inhibited by GUCA1A when free calcium ions concentration is high. Negatively regulated by RD3; RD3 inhibits the basal and GUCA1A-stimulated guanylate cyclase activity. Its function is as follows. Catalyzes the synthesis of cyclic GMP (cGMP) in rods and cones of photoreceptors. Plays an essential role in phototransduction, by mediating cGMP replenishment. May also participate in the trafficking of membrane-asociated proteins to the photoreceptor outer segment membrane. The chain is Retinal guanylyl cyclase 1 (Gucy2e) from Mus musculus (Mouse).